The sequence spans 653 residues: Acetyl-coenzyme A synthetase 1 (653 aa).

Residues 191 to 194 (RGGR), threonine 311, and asparagine 335 contribute to the CoA site. Residues 387–389 (GEP), 411–416 (DTWWQT), aspartate 500, and arginine 515 each bind ATP. Serine 523 lines the CoA pocket. Arginine 526 is an ATP binding site. Mg(2+)-binding residues include valine 537, histidine 539, and valine 542. Arginine 584 is a CoA binding site. Lysine 609 carries the N6-acetyllysine modification.

It belongs to the ATP-dependent AMP-binding enzyme family. The cofactor is Mg(2+). Acetylated. Deacetylation by the SIR2-homolog deacetylase activates the enzyme.

The enzyme catalyses acetate + ATP + CoA = acetyl-CoA + AMP + diphosphate. Catalyzes the conversion of acetate into acetyl-CoA (AcCoA), an essential intermediate at the junction of anabolic and catabolic pathways. AcsA undergoes a two-step reaction. In the first half reaction, AcsA combines acetate with ATP to form acetyl-adenylate (AcAMP) intermediate. In the second half reaction, it can then transfer the acetyl group from AcAMP to the sulfhydryl group of CoA, forming the product AcCoA. In Pseudomonas putida (strain ATCC 47054 / DSM 6125 / CFBP 8728 / NCIMB 11950 / KT2440), this protein is Acetyl-coenzyme A synthetase 1.